The chain runs to 398 residues: Argininosuccinate lyase (398 aa).

It belongs to the lyase 1 family. Argininosuccinate lyase subfamily.

The protein resides in the cytoplasm. The enzyme catalyses 2-(N(omega)-L-arginino)succinate = fumarate + L-arginine. It participates in amino-acid biosynthesis; L-arginine biosynthesis; L-arginine from L-ornithine and carbamoyl phosphate: step 3/3. The sequence is that of Argininosuccinate lyase from Thermotoga neapolitana (strain ATCC 49049 / DSM 4359 / NBRC 107923 / NS-E).